A 222-amino-acid polypeptide reads, in one-letter code: Glutathione S-transferase A1 (222 aa).

Met-1 bears the N-acetylmethionine mark. Ala-2 carries the post-translational modification N-acetylalanine; in Glutathione S-transferase A1, N-terminally processed. The 81-residue stretch at 3-83 (EKPKLHYFNA…YIASKYNLYG (81 aa)) folds into the GST N-terminal domain. Lys-4 carries the N6-succinyllysine modification. Glutathione contacts are provided by residues Tyr-9, Arg-45, 54–55 (QV), and 67–68 (QT). The GST C-terminal domain maps to 85-207 (DIKERALIDM…LQPGSPRKPP (123 aa)).

The protein belongs to the GST superfamily. Alpha family. As to quaternary structure, homodimer or heterodimer of GSTA1 and GSTA2. As to expression, liver.

Its subcellular location is the cytoplasm. The catalysed reaction is RX + glutathione = an S-substituted glutathione + a halide anion + H(+). It catalyses the reaction prostaglandin A2 + glutathione = prostaglandin A2-S-(R)-glutathione. It carries out the reaction prostaglandin J2 + glutathione = prostaglandin J2-S-(R)-glutathione. The enzyme catalyses (13S)-hydroperoxy-(9Z,11E)-octadecadienoate + 2 glutathione = (13S)-hydroxy-(9Z,11E)-octadecadienoate + glutathione disulfide + H2O. The catalysed reaction is androst-5-ene-3,17-dione = androst-4-ene-3,17-dione. With respect to regulation, the isomerase activity is inhibited by S-methylglutathione (GSMe). Functionally, glutathione S-transferase that catalyzes the nucleophilic attack of the sulfur atom of glutathione on the electrophilic groups of a wide range of exogenous and endogenous compounds. Involved in the formation of glutathione conjugates of both prostaglandin A2 (PGA2) and prostaglandin J2 (PGJ2). It also catalyzes the isomerization of D5-androstene-3,17-dione (AD) into D4-androstene-3,17-dione and may therefore play an important role in hormone biosynthesis. Through its glutathione-dependent peroxidase activity toward the fatty acid hydroperoxide (13S)-hydroperoxy-(9Z,11E)-octadecadienoate/13-HPODE it is also involved in the metabolism of oxidized linoleic acid. This is Glutathione S-transferase A1 (GSTA1) from Homo sapiens (Human).